The sequence spans 874 residues: Alanine--tRNA ligase (874 aa).

Histidine 562, histidine 566, cysteine 664, and histidine 668 together coordinate Zn(2+).

Belongs to the class-II aminoacyl-tRNA synthetase family. It depends on Zn(2+) as a cofactor.

The protein resides in the cytoplasm. The enzyme catalyses tRNA(Ala) + L-alanine + ATP = L-alanyl-tRNA(Ala) + AMP + diphosphate. Its function is as follows. Catalyzes the attachment of alanine to tRNA(Ala) in a two-step reaction: alanine is first activated by ATP to form Ala-AMP and then transferred to the acceptor end of tRNA(Ala). Also edits incorrectly charged Ser-tRNA(Ala) and Gly-tRNA(Ala) via its editing domain. The sequence is that of Alanine--tRNA ligase from Shewanella denitrificans (strain OS217 / ATCC BAA-1090 / DSM 15013).